A 430-amino-acid chain; its full sequence is Synaptotagmin-11 (430 aa).

Residues 1-15 lie on the Vesicular side of the membrane; it reads MAEITNIRPSFDVSP. Residues 16-36 traverse the membrane as a helical segment; sequence VAAGLIGASVLVVCVSVTVFV. Over 37-430 the chain is Cytoplasmic; the sequence is WTCCHQQAEK…IAKWHSLSEY (394 aa). The segment covering 79–90 has biased composition (basic and acidic residues); the sequence is RRDKDGPRRESG. Disordered stretches follow at residues 79–120 and 132–152; these read RRDK…CMDQ and RSPM…SSPE. S133 is subject to Phosphoserine. Positions 134-150 are enriched in polar residues; the sequence is PMTSLTPGESKATSPSS. 2 C2 domains span residues 156–278 and 290–425; these read MLGS…QLTR and SRGE…AKWH. D249, S252, and D255 together coordinate Ca(2+).

This sequence belongs to the synaptotagmin family. Homodimer. Can also form heterodimers. Interacts with PRKN. Interacts (via C2 2 domain) with AGO2 and SND1; the interaction with SND1 is direct. Interacts with KIF1A; the interaction increases in presence of calcium. Ca(2+) is required as a cofactor. In terms of processing, ubiquitinated, at least by PRKN, and targeted to the proteasome complex for degradation. Ubiquitination is inhibited by ATP13A2. As to expression, expressed in cerebellun, cerebellar cortex, hippocampus, olfactory bulb and spinal cord (at protein level). Expressed by neurons, astrocytes and microglia (at protein level). Expressed in macrophages (at protein level).

The protein localises to the cytoplasmic vesicle membrane. Its subcellular location is the perikaryon. The protein resides in the golgi apparatus. It localises to the trans-Golgi network membrane. It is found in the recycling endosome membrane. The protein localises to the lysosome membrane. Its subcellular location is the cytoplasmic vesicle. The protein resides in the phagosome. It localises to the cell projection. It is found in the axon. The protein localises to the dendrite. Its subcellular location is the postsynaptic density. The protein resides in the clathrin-coated vesicle membrane. Functionally, synaptotagmin family member involved in vesicular and membrane trafficking which does not bind Ca(2+). Inhibits clathrin-mediated and bulk endocytosis, functions to ensure precision in vesicle retrieval. Plays an important role in dopamine transmission by regulating endocytosis and the vesicle-recycling process. Essential component of a neuronal vesicular trafficking pathway that differs from the synaptic vesicle trafficking pathway but is crucial for development and synaptic plasticity. In macrophages and microglia, inhibits the conventional cytokine secretion, of at least IL6 and TNF, and phagocytosis. In astrocytes, regulates lysosome exocytosis, mechanism required for the repair of injured astrocyte cell membrane. Required for the ATP13A2-mediated regulation of the autophagy-lysosome pathway. The protein is Synaptotagmin-11 of Mus musculus (Mouse).